A 340-amino-acid polypeptide reads, in one-letter code: Coproporphyrin III ferrochelatase (340 aa).

Positions 52 and 121 each coordinate Fe-coproporphyrin III. H177 and E260 together coordinate Fe(2+).

Belongs to the ferrochelatase family.

Its subcellular location is the cytoplasm. It catalyses the reaction Fe-coproporphyrin III + 2 H(+) = coproporphyrin III + Fe(2+). It functions in the pathway porphyrin-containing compound metabolism; protoheme biosynthesis. Its function is as follows. Involved in coproporphyrin-dependent heme b biosynthesis. Catalyzes the insertion of ferrous iron into coproporphyrin III to form Fe-coproporphyrin III. This is Coproporphyrin III ferrochelatase from Mycobacteroides abscessus (strain ATCC 19977 / DSM 44196 / CCUG 20993 / CIP 104536 / JCM 13569 / NCTC 13031 / TMC 1543 / L948) (Mycobacterium abscessus).